Consider the following 323-residue polypeptide: Fructokinase-1 (323 aa).

Belongs to the carbohydrate kinase PfkB family. In terms of tissue distribution, expressed in root, endosperm and leaf tissues.

The enzyme catalyses D-fructose + ATP = D-fructose 6-phosphate + ADP + H(+). It functions in the pathway glycan biosynthesis; starch biosynthesis. Completely inhibited at 50 mM ATP, but not inhibited at high fructose concentration. Its function is as follows. Fructokinase that may play an important role in maintaining the flux of carbon towards starch formation. May also be involved in a sugar-sensing pathway. In Oryza sativa subsp. japonica (Rice), this protein is Fructokinase-1.